We begin with the raw amino-acid sequence, 445 residues long: Disintegrin and metalloproteinase domain-containing protein 18 (445 aa).

Residues Ile-1–Ser-106 enclose the Peptidase M12B domain. At Ile-1–Ser-409 the chain is on the extracellular side. Disulfide bonds link Cys-18–Cys-101, Cys-60–Cys-85, and Cys-62–Cys-67. 2 N-linked (GlcNAc...) asparagine glycosylation sites follow: Asn-19 and Asn-59. N-linked (GlcNAc...) asparagine glycosylation is found at Asn-84 and Asn-131. The 90-residue stretch at Gln-113–Asp-202 folds into the Disintegrin domain. An intrachain disulfide couples Cys-173 to Cys-194. Residues Asn-333 and Asn-340 are each glycosylated (N-linked (GlcNAc...) asparagine). An EGF-like domain is found at Thr-342–Asn-376. Intrachain disulfides connect Cys-346–Cys-358, Cys-352–Cys-364, and Cys-366–Cys-375. The helical transmembrane segment at Trp-410–Ile-430 threads the bilayer. The Cytoplasmic segment spans residues Lys-431 to Arg-445.

In terms of processing, the prodomain and the metalloprotease-like domain are cleaved during the epididymal maturation of the spermatozoa. Expressed specifically in testis.

The protein resides in the membrane. Its function is as follows. Sperm surface membrane protein that may be involved in spermatogenesis and fertilization. This is a non catalytic metalloprotease-like protein. The protein is Disintegrin and metalloproteinase domain-containing protein 18 (Adam18) of Rattus norvegicus (Rat).